The following is a 358-amino-acid chain: 1-deoxy-D-xylulose 5-phosphate reductoisomerase (358 aa).

NADPH is bound by residues Thr7, Gly8, Ser9, Ile10, Gly31, Asn33, and Asn114. Residue Lys115 participates in 1-deoxy-D-xylulose 5-phosphate binding. Position 116 (Glu116) interacts with NADPH. Residue Asp134 coordinates Mn(2+). 4 residues coordinate 1-deoxy-D-xylulose 5-phosphate: Ser135, Glu136, Ser157, and His180. Glu136 contributes to the Mn(2+) binding site. Gly186 serves as a coordination point for NADPH. Residues Ser193, Asn198, Lys199, and Glu202 each contribute to the 1-deoxy-D-xylulose 5-phosphate site. Glu202 is a binding site for Mn(2+).

It belongs to the DXR family. The cofactor is Mg(2+). Requires Mn(2+) as cofactor.

The enzyme catalyses 2-C-methyl-D-erythritol 4-phosphate + NADP(+) = 1-deoxy-D-xylulose 5-phosphate + NADPH + H(+). The protein operates within isoprenoid biosynthesis; isopentenyl diphosphate biosynthesis via DXP pathway; isopentenyl diphosphate from 1-deoxy-D-xylulose 5-phosphate: step 1/6. In terms of biological role, catalyzes the NADPH-dependent rearrangement and reduction of 1-deoxy-D-xylulose-5-phosphate (DXP) to 2-C-methyl-D-erythritol 4-phosphate (MEP). The polypeptide is 1-deoxy-D-xylulose 5-phosphate reductoisomerase (Wolinella succinogenes (strain ATCC 29543 / DSM 1740 / CCUG 13145 / JCM 31913 / LMG 7466 / NCTC 11488 / FDC 602W) (Vibrio succinogenes)).